Reading from the N-terminus, the 246-residue chain is tRNA (guanine-N(7)-)-methyltransferase (246 aa).

Positions 77, 102, 129, and 152 each coordinate S-adenosyl-L-methionine. Asp-152 is an active-site residue. Substrate is bound by residues Lys-156, Asp-188, and 225-228 (TKFE).

The protein belongs to the class I-like SAM-binding methyltransferase superfamily. TrmB family.

The catalysed reaction is guanosine(46) in tRNA + S-adenosyl-L-methionine = N(7)-methylguanosine(46) in tRNA + S-adenosyl-L-homocysteine. It participates in tRNA modification; N(7)-methylguanine-tRNA biosynthesis. Its function is as follows. Catalyzes the formation of N(7)-methylguanine at position 46 (m7G46) in tRNA. The sequence is that of tRNA (guanine-N(7)-)-methyltransferase from Haemophilus influenzae (strain PittEE).